The sequence spans 314 residues: Malate dehydrogenase (314 aa).

NAD(+) is bound by residues 11 to 16 (GSGNIG) and D35. Substrate is bound by residues R84 and R90. Residues N97 and 120-122 (ITN) each bind NAD(+). N122 and R153 together coordinate substrate. The active-site Proton acceptor is H177.

The protein belongs to the LDH/MDH superfamily. MDH type 3 family.

The enzyme catalyses (S)-malate + NAD(+) = oxaloacetate + NADH + H(+). Functionally, catalyzes the reversible oxidation of malate to oxaloacetate. In Rickettsia bellii (strain OSU 85-389), this protein is Malate dehydrogenase.